The sequence spans 94 residues: Aspartyl/glutamyl-tRNA(Asn/Gln) amidotransferase subunit C (94 aa).

The protein belongs to the GatC family. In terms of assembly, heterotrimer of A, B and C subunits.

It carries out the reaction L-glutamyl-tRNA(Gln) + L-glutamine + ATP + H2O = L-glutaminyl-tRNA(Gln) + L-glutamate + ADP + phosphate + H(+). It catalyses the reaction L-aspartyl-tRNA(Asn) + L-glutamine + ATP + H2O = L-asparaginyl-tRNA(Asn) + L-glutamate + ADP + phosphate + 2 H(+). Functionally, allows the formation of correctly charged Asn-tRNA(Asn) or Gln-tRNA(Gln) through the transamidation of misacylated Asp-tRNA(Asn) or Glu-tRNA(Gln) in organisms which lack either or both of asparaginyl-tRNA or glutaminyl-tRNA synthetases. The reaction takes place in the presence of glutamine and ATP through an activated phospho-Asp-tRNA(Asn) or phospho-Glu-tRNA(Gln). The chain is Aspartyl/glutamyl-tRNA(Asn/Gln) amidotransferase subunit C from Desulfotalea psychrophila (strain LSv54 / DSM 12343).